A 1992-amino-acid polypeptide reads, in one-letter code: Otoferlin (1992 aa).

C2 domains follow at residues 1–98, 241–362, and 405–536; these read MALV…EVSD, KRSK…HKWA, and IEGN…FLPT. At 1–1958 the chain is on the cytoplasmic side; that stretch reads MALVVHLKTV…IRYFIWHNYR (1958 aa). The interval 655 to 699 is disordered; that stretch reads PALAKKKKEGGGESEEEESELIHNSSEEEAEDDGDLTSVPSTPPM. C2 domains lie at 952 to 1077 and 1124 to 1250; these read IQAV…PPRF and RGPI…NNWA. Residues D984, D990, D1046, and D1048 each contribute to the Ca(2+) site. The stretch at 1282–1363 forms a coiled coil; the sequence is VKVDLNEDEK…ESAEIKADDF (82 aa). Disordered stretches follow at residues 1288-1311 and 1354-1399; these read EDEKEKEKKKKKKKKGEEVEEEEP and ESAE…KPKV. Residues 1356–1399 show a composition bias toward basic and acidic residues; that stretch reads AEIKADDFPMKGTKPKEKSKDKKSTKDKKKNNDGTEKRPPKPKV. 2 consecutive C2 domains span residues 1470 to 1588 and 1711 to 1860; these read DPNM…ATCG and PAPG…KQCS. Ca(2+) contacts are provided by D1503, D1509, D1558, D1560, D1566, D1831, S1834, and D1837. Residues 1959 to 1979 form a helical membrane-spanning segment; that stretch reads WLILKALALLLLLLLVGLFLY. Residues 1980–1992 lie on the Extracellular side of the membrane; the sequence is SIPGYLVKKLLGA.

It belongs to the ferlin family. It depends on Ca(2+) as a cofactor.

It localises to the cytoplasmic vesicle. Its subcellular location is the secretory vesicle. It is found in the synaptic vesicle membrane. The protein resides in the basolateral cell membrane. The protein localises to the endoplasmic reticulum membrane. It localises to the golgi apparatus membrane. Its subcellular location is the presynaptic cell membrane. It is found in the cell membrane. Functionally, key calcium ion sensor involved in the Ca(2+)-triggered synaptic vesicle-plasma membrane fusion and in the control of neurotransmitter release at these output synapses. In Danio rerio (Zebrafish), this protein is Otoferlin (otof).